A 309-amino-acid polypeptide reads, in one-letter code: Mitochondrial glycine transporter (309 aa).

Solcar repeat units lie at residues 2-94 (SNVG…LRAL), 124-207 (LTSQ…IKHE), and 219-304 (QATL…GLML). 6 helical membrane-spanning segments follow: residues 8-33 (LLSG…TRLQ), 69-95 (GTTP…RALM), 130-155 (LIAG…ARFE), 182-205 (GFLA…EGIK), 223-249 (IHGL…KTKI), and 279-297 (GASL…GWAV).

Belongs to the mitochondrial carrier (TC 2.A.29) family. SLC25A38 subfamily.

The protein localises to the mitochondrion inner membrane. It carries out the reaction glycine(in) = glycine(out). Its function is as follows. Mitochondrial glycine transporter that imports glycine into the mitochondrial matrix. Plays an important role in providing glycine for the first enzymatic step in heme biosynthesis, the condensation of glycine with succinyl-CoA to produce 5-aminolevulinate (ALA) in the mitochondrial matrix. This chain is Mitochondrial glycine transporter, found in Laccaria bicolor (strain S238N-H82 / ATCC MYA-4686) (Bicoloured deceiver).